A 254-amino-acid chain; its full sequence is Chalcone isomerase cfoK (254 aa).

Active-site residues include histidine 33 and tyrosine 50.

It carries out the reaction a chalcone = a flavanone.. The protein operates within secondary metabolite biosynthesis; flavonoid biosynthesis. Functionally, chalcone isomerase; part of the gene cluster that mediates the biosynthesis of chlorflavonin, a fungal flavonoid with acetolactate synthase inhibitory activity. Within the pathway, cfoK acts as chalcone isomerase (CHI), the key enzyme responsible for the tricyclic formation of flavanone through Michael-type intramolecular cyclization of chalcone. The hydrogen at C2'-OH is extracted by the imidazole ring of His-33, which induces the oxa-Michael addition to form the intermediate enolate through 6-endo-trig mode cyclization. The enolate can then be stabilized by a hydrogen bond with the Tyr-50 residue. Following enol tautomerization, the C ring, a gamma-pyranone ring, is formed. The pathway begins with the PKS-NRPS hybrid synthetase cfoA that uses benzoic acid or p-hydroxybenzoic acid as a starter unit with four rounds of chain elongation using malonyl-CoA to form the chalcone skeleton. Then, a new type of chalcone isomerase, cfoK, catalyzes the conversion of the chalcone into a flavanone by a histidine-mediated oxa-Michael addition mechanism. The desaturation of flavanone to flavone is catalyzed by a new type of flavone synthase, the flavin mononucleotide (FMN)-dependent oxidoreductase cfoJ. Monooxygenases cfoF, cfoG, and P450 cfoH are responsible for the hydroxylation of the flavonoid skeleton at sites C3, C8, and C2', respectively. Like cfoF, the dehydratase cfoI plays also a role in the hydroxylation of position C3. Methyltransferases cfoB, cfoC, and cfoD then catalyze the methylation of C7-OH, C8-OH, and C3-OH, respectively. Finally, the monooxygenase cfoE is responsible for the chlorination of flavonoid at position C3'. This Aspergillus candidus protein is Chalcone isomerase cfoK.